The sequence spans 493 residues: Glutamyl-tRNA(Gln) amidotransferase subunit A (493 aa).

Catalysis depends on charge relay system residues lysine 78 and serine 158. Catalysis depends on serine 182, which acts as the Acyl-ester intermediate.

This sequence belongs to the amidase family. GatA subfamily. As to quaternary structure, heterotrimer of A, B and C subunits.

The enzyme catalyses L-glutamyl-tRNA(Gln) + L-glutamine + ATP + H2O = L-glutaminyl-tRNA(Gln) + L-glutamate + ADP + phosphate + H(+). Its function is as follows. Allows the formation of correctly charged Gln-tRNA(Gln) through the transamidation of misacylated Glu-tRNA(Gln) in organisms which lack glutaminyl-tRNA synthetase. The reaction takes place in the presence of glutamine and ATP through an activated gamma-phospho-Glu-tRNA(Gln). The protein is Glutamyl-tRNA(Gln) amidotransferase subunit A of Rickettsia bellii (strain OSU 85-389).